The primary structure comprises 391 residues: Succinate--CoA ligase [ADP-forming] subunit beta (391 aa).

The ATP-grasp domain occupies 9–248 (KDILRKFGVS…TGEEDPFEVE (240 aa)). Residues lysine 50, 57-59 (GRG), glutamate 103, methionine 106, and glutamate 111 each bind ATP. Positions 203 and 217 each coordinate Mg(2+). Substrate is bound by residues asparagine 268 and 325-327 (GIV).

Belongs to the succinate/malate CoA ligase beta subunit family. As to quaternary structure, heterotetramer of two alpha and two beta subunits. Mg(2+) serves as cofactor.

It carries out the reaction succinate + ATP + CoA = succinyl-CoA + ADP + phosphate. The enzyme catalyses GTP + succinate + CoA = succinyl-CoA + GDP + phosphate. Its pathway is carbohydrate metabolism; tricarboxylic acid cycle; succinate from succinyl-CoA (ligase route): step 1/1. In terms of biological role, succinyl-CoA synthetase functions in the citric acid cycle (TCA), coupling the hydrolysis of succinyl-CoA to the synthesis of either ATP or GTP and thus represents the only step of substrate-level phosphorylation in the TCA. The beta subunit provides nucleotide specificity of the enzyme and binds the substrate succinate, while the binding sites for coenzyme A and phosphate are found in the alpha subunit. This is Succinate--CoA ligase [ADP-forming] subunit beta from Chlorobium phaeobacteroides (strain BS1).